Consider the following 33-residue polypeptide: Pardaxin P-4 (33 aa).

Belongs to the pardaxin family. As to quaternary structure, monomer. In aqueous solution exists as a tetramer.

The protein resides in the secreted. It is found in the target cell membrane. Its function is as follows. Exhibits unusual shark repellent and surfactant properties. Forms voltage-dependent, ion-permeable channels in membranes. At high concentration causes cell membrane lysis. This Pardachirus marmoratus (Finless sole) protein is Pardaxin P-4.